The following is a 293-amino-acid chain: Acidic endochitinase (293 aa).

The signal sequence occupies residues 1 to 22 (MEKCFNIIPSLLLISLLIKSSN). The region spanning 24 to 293 (AGIAVYWGQN…GYSNAIKGSV (270 aa)) is the GH18 domain. Cystine bridges form between Cys43/Cys90 and Cys73/Cys80. Glu150 serves as the catalytic Proton donor. A disulfide bridge connects residues Cys179 and Cys208.

This sequence belongs to the glycosyl hydrolase 18 family. Chitinase class II subfamily.

It is found in the secreted. It localises to the extracellular space. It carries out the reaction Random endo-hydrolysis of N-acetyl-beta-D-glucosaminide (1-&gt;4)-beta-linkages in chitin and chitodextrins.. Its function is as follows. This protein functions as a defense against chitin containing fungal pathogens. The sequence is that of Acidic endochitinase from Cicer arietinum (Chickpea).